We begin with the raw amino-acid sequence, 1839 residues long: Adenylate cyclase (1839 aa).

6 disordered regions span residues 1-21, 43-87, 126-245, 272-315, 332-388, and 400-468; these read MSSP…PQIE, ITTH…PRFS, TSLL…PIVS, KNTE…QWTA, KRKA…DSND, and ESSG…SFSK. Residues 165-211 show a composition bias toward polar residues; the sequence is SQSNESRGTRSSIFFPSTSNSRRGSATSTMTSGSRSSHPPDTPPITS. Residues 212 to 221 show a composition bias toward low complexity; the sequence is QQQEQQYDQQ. Residues 222–233 show a composition bias toward basic and acidic residues; the sequence is RQQRPETREQEQ. Basic residues predominate over residues 332–355; that stretch reads KRKAKHHHHYHHPQHPRPPHRKHY. Residues 361 to 376 show a composition bias toward basic and acidic residues; that stretch reads PIEDKAVVEKEQEPPE. Over residues 407–428 the composition is skewed to low complexity; it reads SASTQSVSSFSSGATGASGATG. A Ras-associating domain is found at 494 to 574; it reads RRYAIRIFNI…LNGYLKSDPL (81 aa). LRR repeat units follow at residues 632-655, 659-679, 681-702, 704-726, 727-748, 750-771, 773-794, 795-816, 817-834, 835-856, 858-879, 882-903, 905-926, 928-950, 951-971, 982-1004, 1006-1027, 1028-1048, 1051-1073, 1074-1096, 1103-1124, and 1135-1160; these read TSDI…FIES, LSSL…VTDA, KLVS…IFKL, NLTI…SKLK, NLQL…INSC, NLLQ…INQL, KLAK…SQMK, NLRT…APNL, QNLF…DDLT, RLRT…GNYM, NMTS…LLSK, RLEK…INKL, RLIY…ISDL, SLKS…EDLE, LTSL…PAKF, SLLF…VNTF, NLKT…KLQN, LTEL…AVQH, SLKV…SQLS, RLSV…HYDW, DLKY…LDPE, and LKQL…SVSI. Positions 1173–1439 constitute a PPM-type phosphatase domain; the sequence is RYGVADTLGQ…DNITILCVSL (267 aa). A Guanylate cyclase domain is found at 1483 to 1620; sequence AIVFTDIKNS…PVVNKAARVS (138 aa). Mg(2+) is bound by residues D1488 and D1531.

The protein belongs to the adenylyl cyclase class-3 family. Requires Mg(2+) as cofactor.

The catalysed reaction is ATP = 3',5'-cyclic AMP + diphosphate. Its function is as follows. Plays essential roles in regulation of cellular metabolism by catalyzing the synthesis of a second messenger, cAMP. The chain is Adenylate cyclase (CYR1) from Lachancea kluyveri (Yeast).